The chain runs to 235 residues: Phosphoribosylaminoimidazole-succinocarboxamide synthase (235 aa).

The protein belongs to the SAICAR synthetase family.

The enzyme catalyses 5-amino-1-(5-phospho-D-ribosyl)imidazole-4-carboxylate + L-aspartate + ATP = (2S)-2-[5-amino-1-(5-phospho-beta-D-ribosyl)imidazole-4-carboxamido]succinate + ADP + phosphate + 2 H(+). It functions in the pathway purine metabolism; IMP biosynthesis via de novo pathway; 5-amino-1-(5-phospho-D-ribosyl)imidazole-4-carboxamide from 5-amino-1-(5-phospho-D-ribosyl)imidazole-4-carboxylate: step 1/2. The chain is Phosphoribosylaminoimidazole-succinocarboxamide synthase from Chloroherpeton thalassium (strain ATCC 35110 / GB-78).